A 173-amino-acid chain; its full sequence is Photosystem I assembly protein Ycf3 (173 aa).

TPR repeat units follow at residues 35 to 68 (AYVY…EENS), 72 to 105 (SETL…NPNQ), and 120 to 153 (GRIA…NPGG).

It belongs to the Ycf3 family.

It is found in the cellular thylakoid membrane. Functionally, essential for the assembly of the photosystem I (PSI) complex. May act as a chaperone-like factor to guide the assembly of the PSI subunits. This is Photosystem I assembly protein Ycf3 from Synechococcus sp. (strain CC9605).